The sequence spans 191 residues: Protein Ves (191 aa).

The protein belongs to the Ves family.

The protein is Protein Ves of Escherichia coli (strain UTI89 / UPEC).